A 59-amino-acid polypeptide reads, in one-letter code: Large ribosomal subunit protein eL29 (59 aa).

Residues 1–26 (MAKSKNHTAHNQTRKAHRNGIKKPKT) show a composition bias toward basic residues. Positions 1–37 (MAKSKNHTAHNQTRKAHRNGIKKPKTYKYPSLKGVDP) are disordered. A Glycyl lysine isopeptide (Lys-Gly) (interchain with G-Cter in ubiquitin) cross-link involves residue lysine 52.

It belongs to the eukaryotic ribosomal protein eL29 family. In terms of assembly, component of the large ribosomal subunit (LSU). Mature yeast ribosomes consist of a small (40S) and a large (60S) subunit. The 40S small subunit contains 1 molecule of ribosomal RNA (18S rRNA) and 33 different proteins (encoded by 57 genes). The large 60S subunit contains 3 rRNA molecules (25S, 5.8S and 5S rRNA) and 46 different proteins (encoded by 81 genes).

Its subcellular location is the cytoplasm. Its function is as follows. Component of the ribosome, a large ribonucleoprotein complex responsible for the synthesis of proteins in the cell. The small ribosomal subunit (SSU) binds messenger RNAs (mRNAs) and translates the encoded message by selecting cognate aminoacyl-transfer RNA (tRNA) molecules. The large subunit (LSU) contains the ribosomal catalytic site termed the peptidyl transferase center (PTC), which catalyzes the formation of peptide bonds, thereby polymerizing the amino acids delivered by tRNAs into a polypeptide chain. The nascent polypeptides leave the ribosome through a tunnel in the LSU and interact with protein factors that function in enzymatic processing, targeting, and the membrane insertion of nascent chains at the exit of the ribosomal tunnel. The polypeptide is Large ribosomal subunit protein eL29 (Saccharomyces cerevisiae (strain ATCC 204508 / S288c) (Baker's yeast)).